Consider the following 332-residue polypeptide: Cytochrome c oxidase subunit 2 (332 aa).

Residues 1 to 20 (MKIPGSVITLLIGVVITVVS) form the signal peptide. Helical transmembrane passes span 48 to 68 (MMTIATGLFLLVEGVLVYCLI) and 87 to 107 (VPLEILWTAIPTVIVFTLAVY). 4 residues coordinate Cu cation: histidine 214, cysteine 249, cysteine 253, and histidine 257.

It belongs to the cytochrome c oxidase subunit 2 family. It depends on Cu cation as a cofactor.

Its subcellular location is the cell membrane. The enzyme catalyses 4 Fe(II)-[cytochrome c] + O2 + 8 H(+)(in) = 4 Fe(III)-[cytochrome c] + 2 H2O + 4 H(+)(out). In terms of biological role, subunits I and II form the functional core of the enzyme complex. Electrons originating in cytochrome c are transferred via heme a and Cu(A) to the binuclear center formed by heme a3 and Cu(B). The chain is Cytochrome c oxidase subunit 2 (ctaC) from Synechocystis sp. (strain ATCC 27184 / PCC 6803 / Kazusa).